The following is a 121-amino-acid chain: Putative iron-sulfur cluster insertion protein ErpA (121 aa).

Residues Cys49, Cys113, and Cys115 each contribute to the iron-sulfur cluster site.

Belongs to the HesB/IscA family. Homodimer. Iron-sulfur cluster serves as cofactor.

Required for insertion of 4Fe-4S clusters. The protein is Putative iron-sulfur cluster insertion protein ErpA of Paraburkholderia phymatum (strain DSM 17167 / CIP 108236 / LMG 21445 / STM815) (Burkholderia phymatum).